Reading from the N-terminus, the 755-residue chain is Bacteriophytochrome (755 aa).

An a tetrapyrrole-binding site is contributed by cysteine 24. The PAS domain maps to 26-94; it reads REPIHIPGSI…LQAALPPGCP (69 aa). The chromophore binding domain stretch occupies residues 95–504; the sequence is DALQYRATLD…RDTLTGALGE (410 aa). In terms of domain architecture, GAF spans 152 to 316; that stretch reads NLRALAEVAT…YLGRLLSLQV (165 aa). The region spanning 529–747 is the Histidine kinase domain; sequence VISHHMQEPV…TFRCWLPDAG (219 aa). Phosphohistidine; by autocatalysis is present on histidine 532.

The protein in the N-terminal section; belongs to the phytochrome family. Contains one covalently linked tetrapyrrole chromophore. Lacks the cysteine conserved in plant phytochromes (at the position of Met-259) that binds chromophore. An engineered sequence used for X-ray crystallography forms a thioether link to biliverdin through Cys-24. The natural sequence can bind phycocyanobilin and phytochromobilin in vitro, but the identity of the natural chromophore is unknown.

The catalysed reaction is ATP + protein L-histidine = ADP + protein N-phospho-L-histidine.. Functionally, photoreceptor which exists in two forms that are reversibly interconvertible by light: the R form that absorbs maximally in the red region of the spectrum and the FR form that absorbs maximally in the far-red region. Also has a slight blue shift for the far-red maximum. Could also absorb green light. May participate in regulating pigment synthesis like the carotenoid deinoxanthin which could protect the bacterium from intense visible light. The sequence is that of Bacteriophytochrome (bphP) from Deinococcus radiodurans (strain ATCC 13939 / DSM 20539 / JCM 16871 / CCUG 27074 / LMG 4051 / NBRC 15346 / NCIMB 9279 / VKM B-1422 / R1).